Consider the following 164-residue polypeptide: R-phycoerythrin alpha chain (164 aa).

Positions 82 and 139 each coordinate (2R,3E)-phycoerythrobilin.

The protein belongs to the phycobiliprotein family. In terms of assembly, heterodimer of an alpha and a beta chain. Contains two covalently linked bilin chromophores.

It is found in the plastid. The protein localises to the chloroplast thylakoid membrane. Functionally, light-harvesting photosynthetic bile pigment-protein from the phycobiliprotein complex. This Pyropia tenera (Nori) protein is R-phycoerythrin alpha chain (cpeA).